The following is a 499-amino-acid chain: GTPase Der (499 aa).

EngA-type G domains lie at 3–166 and 211–384; these read PVVA…MDEV and IKLA…DCST. Residues 9–16, 56–60, 118–121, 217–224, 264–268, and 329–332 contribute to the GTP site; these read GRPNVGKS, DTGGI, NKTD, DTAGV, and NKWD. The 85-residue stretch at 385–469 folds into the KH-like domain; the sequence is RRVNTSMLTR…PIRIQFKEGD (85 aa).

This sequence belongs to the TRAFAC class TrmE-Era-EngA-EngB-Septin-like GTPase superfamily. EngA (Der) GTPase family. In terms of assembly, associates with the 50S ribosomal subunit.

In terms of biological role, GTPase that plays an essential role in the late steps of ribosome biogenesis. This chain is GTPase Der, found in Erwinia tasmaniensis (strain DSM 17950 / CFBP 7177 / CIP 109463 / NCPPB 4357 / Et1/99).